Reading from the N-terminus, the 691-residue chain is Elongation factor G (691 aa).

Residues 6 to 281 (SKYRNIGIMA…GVVDFLPSPI (276 aa)) enclose the tr-type G domain. GTP-binding positions include 15–22 (AHIDAGKT), 79–83 (DTPGH), and 133–136 (NKMD).

This sequence belongs to the TRAFAC class translation factor GTPase superfamily. Classic translation factor GTPase family. EF-G/EF-2 subfamily.

The protein resides in the cytoplasm. Catalyzes the GTP-dependent ribosomal translocation step during translation elongation. During this step, the ribosome changes from the pre-translocational (PRE) to the post-translocational (POST) state as the newly formed A-site-bound peptidyl-tRNA and P-site-bound deacylated tRNA move to the P and E sites, respectively. Catalyzes the coordinated movement of the two tRNA molecules, the mRNA and conformational changes in the ribosome. This is Elongation factor G from Wolbachia pipientis wMel.